The chain runs to 397 residues: Chorismate synthase (397 aa).

The NADP(+) site is built by R40 and R46. Residues R129–S131, Q257–A258, G302, K317–T321, and R343 contribute to the FMN site.

It belongs to the chorismate synthase family. As to quaternary structure, homotetramer. It depends on FMNH2 as a cofactor.

It catalyses the reaction 5-O-(1-carboxyvinyl)-3-phosphoshikimate = chorismate + phosphate. The protein operates within metabolic intermediate biosynthesis; chorismate biosynthesis; chorismate from D-erythrose 4-phosphate and phosphoenolpyruvate: step 7/7. Functionally, catalyzes the anti-1,4-elimination of the C-3 phosphate and the C-6 proR hydrogen from 5-enolpyruvylshikimate-3-phosphate (EPSP) to yield chorismate, which is the branch point compound that serves as the starting substrate for the three terminal pathways of aromatic amino acid biosynthesis. This reaction introduces a second double bond into the aromatic ring system. In Prosthecochloris aestuarii (strain DSM 271 / SK 413), this protein is Chorismate synthase.